A 361-amino-acid polypeptide reads, in one-letter code: 3-dehydroquinate synthase (361 aa).

NAD(+)-binding positions include 73–78 (DAEAGK), 107–111 (GAATD), 131–132 (TT), Lys-144, Lys-153, and 171–174 (TLET). Zn(2+) is bound by residues Glu-186, His-249, and His-265.

This sequence belongs to the sugar phosphate cyclases superfamily. Dehydroquinate synthase family. It depends on NAD(+) as a cofactor. The cofactor is Co(2+). Zn(2+) is required as a cofactor.

Its subcellular location is the cytoplasm. The enzyme catalyses 7-phospho-2-dehydro-3-deoxy-D-arabino-heptonate = 3-dehydroquinate + phosphate. The protein operates within metabolic intermediate biosynthesis; chorismate biosynthesis; chorismate from D-erythrose 4-phosphate and phosphoenolpyruvate: step 2/7. Catalyzes the conversion of 3-deoxy-D-arabino-heptulosonate 7-phosphate (DAHP) to dehydroquinate (DHQ). The chain is 3-dehydroquinate synthase from Mycobacterium leprae (strain TN).